A 516-amino-acid chain; its full sequence is Protein psiC (516 aa).

An N-terminal signal peptide occupies residues 1–19 (MKILILSFFLILGINLVFC). The PA14 domain occupies 109-249 (ESKDEPGIYV…YDACGVCLGK (141 aa)). N-linked (GlcNAc...) asparagine glycosylation is found at Asn134, Asn234, Asn250, Asn284, Asn333, Asn357, and Asn367. Low complexity predominate over residues 418 to 427 (DIIIDSSSDI). Residues 418–465 (DIIIDSSSDIPIPTLSPSPQPSRFPTDTPTNTPMPPTRPPTPTEDPKI) are disordered. The segment covering 449-460 (TPMPPTRPPTPT) has biased composition (pro residues).

The protein belongs to the prespore-cell-inducing factor family.

The protein localises to the secreted. The chain is Protein psiC (psiC) from Dictyostelium discoideum (Social amoeba).